The sequence spans 378 residues: TelA-like protein SAV1406 (378 aa).

The protein belongs to the TelA family.

This Staphylococcus aureus (strain Mu50 / ATCC 700699) protein is TelA-like protein SAV1406.